Consider the following 405-residue polypeptide: Argininosuccinate synthase (405 aa).

ATP is bound by residues 10–18 (AYSGGLDTS) and Ala-37. L-citrulline-binding residues include Tyr-88 and Ser-93. Position 118 (Gly-118) interacts with ATP. Thr-120, Asn-124, and Asp-125 together coordinate L-aspartate. Asn-124 contacts L-citrulline. Residues Arg-128, Ser-179, Ser-188, Glu-264, and Tyr-276 each contribute to the L-citrulline site.

Belongs to the argininosuccinate synthase family. Type 1 subfamily. In terms of assembly, homotetramer.

It localises to the cytoplasm. The enzyme catalyses L-citrulline + L-aspartate + ATP = 2-(N(omega)-L-arginino)succinate + AMP + diphosphate + H(+). It participates in amino-acid biosynthesis; L-arginine biosynthesis; L-arginine from L-ornithine and carbamoyl phosphate: step 2/3. The protein is Argininosuccinate synthase of Pseudomonas syringae pv. syringae (strain B728a).